We begin with the raw amino-acid sequence, 474 residues long: Cysteine--tRNA ligase (474 aa).

Residue Cys-34 coordinates Zn(2+). A 'HIGH' region motif is present at residues 36–46; the sequence is PTVYDYAHIGN. The Zn(2+) site is built by Cys-219, His-244, and Glu-248. Positions 276 to 280 match the 'KMSKS' region motif; that stretch reads KMSKS. An ATP-binding site is contributed by Lys-279.

This sequence belongs to the class-I aminoacyl-tRNA synthetase family. In terms of assembly, monomer. Requires Zn(2+) as cofactor.

The protein resides in the cytoplasm. The enzyme catalyses tRNA(Cys) + L-cysteine + ATP = L-cysteinyl-tRNA(Cys) + AMP + diphosphate. This Chlamydia pneumoniae (Chlamydophila pneumoniae) protein is Cysteine--tRNA ligase (cysS).